The sequence spans 181 residues: NAD(P)H-quinone oxidoreductase subunit I, chloroplastic (181 aa).

2 consecutive 4Fe-4S ferredoxin-type domains span residues 55–84 (GRIHFEFDKCIACEVCVRVCPINLPVVDWE) and 95–124 (KNYSIDFAVCIFCGNCVEYCPTNCLSMTEE). [4Fe-4S] cluster-binding residues include cysteine 64, cysteine 67, cysteine 70, cysteine 74, cysteine 104, cysteine 107, cysteine 110, and cysteine 114.

Belongs to the complex I 23 kDa subunit family. NDH is composed of at least 16 different subunits, 5 of which are encoded in the nucleus. Requires [4Fe-4S] cluster as cofactor.

Its subcellular location is the plastid. It localises to the chloroplast thylakoid membrane. The enzyme catalyses a plastoquinone + NADH + (n+1) H(+)(in) = a plastoquinol + NAD(+) + n H(+)(out). The catalysed reaction is a plastoquinone + NADPH + (n+1) H(+)(in) = a plastoquinol + NADP(+) + n H(+)(out). In terms of biological role, NDH shuttles electrons from NAD(P)H:plastoquinone, via FMN and iron-sulfur (Fe-S) centers, to quinones in the photosynthetic chain and possibly in a chloroplast respiratory chain. The immediate electron acceptor for the enzyme in this species is believed to be plastoquinone. Couples the redox reaction to proton translocation, and thus conserves the redox energy in a proton gradient. The chain is NAD(P)H-quinone oxidoreductase subunit I, chloroplastic from Angiopteris evecta (Mule's foot fern).